The sequence spans 433 residues: Serine/threonine-protein kinase DCLK1 (433 aa).

Positions 1–74 (MLELIEVNGT…GEEESDEGFQ (74 aa)) are disordered. Residues S23, S25, S27, S30, S40, S45, S46, S48, S57, and S69 each carry the phosphoserine modification. Over residues 40 to 57 (SQHGGSSTSLSSTKVCSS) the composition is skewed to low complexity. Residues 59–71 (DENDGPGEEESDE) show a composition bias toward acidic residues. The region spanning 83–340 (YKVGRTIGDG…AVQVLEHPWV (258 aa)) is the Protein kinase domain. ATP contacts are provided by residues 89–97 (IGDGNFAVV) and K112. The active-site Proton acceptor is D204. Phosphotyrosine is present on Y213. Residues 388–400 (QVFRRRRNQDVRG) are compositionally biased toward basic and acidic residues. Residues 388-433 (QVFRRRRNQDVRGRYKAQPAPPELNSESEDYSPSSSETVRSPNSPF) form a disordered region. 3 positions are modified to phosphoserine: S419, S428, and S431.

The protein belongs to the protein kinase superfamily. CAMK Ser/Thr protein kinase family. CaMK subfamily.

The catalysed reaction is L-seryl-[protein] + ATP = O-phospho-L-seryl-[protein] + ADP + H(+). It catalyses the reaction L-threonyl-[protein] + ATP = O-phospho-L-threonyl-[protein] + ADP + H(+). Functionally, probable kinase that may be involved in a calcium-signaling pathway controlling neuronal migration in the developing brain. May also participate in functions of the mature nervous system. The chain is Serine/threonine-protein kinase DCLK1 (Dclk1) from Rattus norvegicus (Rat).